A 104-amino-acid chain; its full sequence is UPF0473 protein LJ_0477 (104 aa).

The protein belongs to the UPF0473 family.

This chain is UPF0473 protein LJ_0477, found in Lactobacillus johnsonii (strain CNCM I-12250 / La1 / NCC 533).